A 144-amino-acid chain; its full sequence is MRLNTLSPAAGSKHAPKRVGRGIGSGLGKTGGRGHKGQKSRSGGKVRPGFEGGQMPLKQRLPKFGFTSRKSLVSAEVRVAELAKVTGDVVDLNSLKAANVITKNIENVKIVLSGEINKAVTVKGLRVTKGAKAAIEAAGGKIEE.

Residues 1–57 (MRLNTLSPAAGSKHAPKRVGRGIGSGLGKTGGRGHKGQKSRSGGKVRPGFEGGQMPL) form a disordered region. A compositionally biased stretch (gly residues) spans 21-31 (RGIGSGLGKTG). Residues 32–44 (GRGHKGQKSRSGG) show a composition bias toward basic residues.

The protein belongs to the universal ribosomal protein uL15 family. In terms of assembly, part of the 50S ribosomal subunit.

Binds to the 23S rRNA. The polypeptide is Large ribosomal subunit protein uL15 (Vibrio vulnificus (strain CMCP6)).